Reading from the N-terminus, the 268-residue chain is D-alanyl-D-alanine carboxypeptidase (268 aa).

Residues 25-47 traverse the membrane as a helical segment; sequence AFLWAFIISFTVCTLFLGWRLVS. Substrate-binding positions include Gln-151, 179–181, and Ser-186; that span reads WVA. Zn(2+) is bound by residues His-188 and Asp-195. Glu-238 acts as the Proton donor/acceptor in catalysis. His-241 contributes to the Zn(2+) binding site.

This sequence belongs to the peptidase M15B family. As to quaternary structure, monomer. The cofactor is Zn(2+).

The protein resides in the cell membrane. Its activity is regulated as follows. Carboxypeptidase activity is insensitive to beta-lactams since it is not affected by penicillin G or ampicillin and is inhibited only by very high concentrations of cefalotin and cefoxitin. Its function is as follows. Carboxypeptidase that cleaves the C-terminal D-alanine residue from the peptidoglycan-derived pentapeptide L-Ala-gamma-D-Glu-L-Lys-D-Ala-D-Ala in vitro. Therefore, should contribute in vivo to the hydrolysis of the D-alanyl-D-alanine-containing peptidoglycan precursors. May increase the level of glycopeptide antibiotics resistance by decreasing the availability of D-Ala-D-Ala termini from the cell surface, which constitute the antibiotic target residues. The sequence is that of D-alanyl-D-alanine carboxypeptidase from Enterococcus faecalis (strain ATCC 700802 / V583).